The chain runs to 315 residues: Protein ADP-ribosyltransferase (315 aa).

The 287-residue stretch at 13 to 299 (LMDEKTKQAE…TTALRNDSTT (287 aa)) folds into the Deacetylase sirtuin-type domain. NAD(+) is bound by residues Ala40, 123 to 126 (TNAD), and Gln143. Residues Cys151, Cys155, Cys186, and Cys189 each coordinate Zn(2+). Residues 238 to 240 (YTT), Asn264, Tyr268, and Ile285 contribute to the NAD(+) site.

Belongs to the sirtuin family. Class M subfamily. Requires Zn(2+) as cofactor.

It carries out the reaction L-aspartyl-[protein] + NAD(+) = 4-O-(ADP-D-ribosyl)-L-aspartyl-[protein] + nicotinamide. Its activity is regulated as follows. Is inhibited by Tenovin-6 in vitro, but not by nicotinamide. Its function is as follows. Catalyzes specifically the mono-ADP-ribosylation of GcvH-L (SAV0324). This activity is dependent on prior lipoylation of the target protein. May be involved in the modulation of the response to host-derived oxidative stress. In contrast to other sirtuin classes, lacks protein deacylase activity, being unable to catalyze delipoylation, debiotinylation, deacetylation and desuccinylation of proteins. The protein is Protein ADP-ribosyltransferase of Staphylococcus aureus (strain Mu50 / ATCC 700699).